Consider the following 362-residue polypeptide: Serine/threonine-protein phosphatase 2A activator 1 (362 aa).

A compositionally biased stretch (pro residues) spans 1–10 (MQPHTQPPQP). Disordered stretches follow at residues 1–28 (MQPH…APPR) and 339–362 (NVEE…PWAR). Residues 340–351 (VEERGDKNEGKG) are compositionally biased toward basic and acidic residues.

It belongs to the PTPA-type PPIase family.

The protein resides in the cytoplasm. The protein localises to the nucleus. It catalyses the reaction [protein]-peptidylproline (omega=180) = [protein]-peptidylproline (omega=0). In terms of biological role, PPIases accelerate the folding of proteins. It catalyzes the cis-trans isomerization of proline imidic peptide bonds in oligopeptides. Acts as a regulatory subunit for PP2A-like phosphatases modulating their activity or substrate specificity, probably by inducing a conformational change in the catalytic subunit, a direct target of the PPIase. Can reactivate inactive phosphatase PP2A-phosphatase methylesterase complexes (PP2Ai) in presence of ATP and Mg(2+) by dissociating the inactive form from the complex. The chain is Serine/threonine-protein phosphatase 2A activator 1 (RRD1) from Cryptococcus neoformans var. neoformans serotype D (strain B-3501A) (Filobasidiella neoformans).